Reading from the N-terminus, the 485-residue chain is Cobyric acid synthase (485 aa).

In terms of domain architecture, GATase cobBQ-type spans 248 to 435; the sequence is RLKVAVAVPP…LHGLFESPAA (188 aa). Catalysis depends on cysteine 329, which acts as the Nucleophile. Histidine 427 is an active-site residue.

It belongs to the CobB/CobQ family. CobQ subfamily.

It functions in the pathway cofactor biosynthesis; adenosylcobalamin biosynthesis. In terms of biological role, catalyzes amidations at positions B, D, E, and G on adenosylcobyrinic A,C-diamide. NH(2) groups are provided by glutamine, and one molecule of ATP is hydrogenolyzed for each amidation. The polypeptide is Cobyric acid synthase (Azotobacter vinelandii (strain DJ / ATCC BAA-1303)).